The chain runs to 187 residues: Shikimate kinase (187 aa).

14 to 19 (TSGKST) serves as a coordination point for ATP. Ser-18 lines the Mg(2+) pocket. Substrate is bound by residues Asp-36, Arg-60, and Gly-82. ATP is bound at residue Arg-120. Arg-147 is a substrate binding site.

It belongs to the shikimate kinase family. In terms of assembly, monomer. Mg(2+) serves as cofactor.

It is found in the cytoplasm. The enzyme catalyses shikimate + ATP = 3-phosphoshikimate + ADP + H(+). The protein operates within metabolic intermediate biosynthesis; chorismate biosynthesis; chorismate from D-erythrose 4-phosphate and phosphoenolpyruvate: step 5/7. In terms of biological role, catalyzes the specific phosphorylation of the 3-hydroxyl group of shikimic acid using ATP as a cosubstrate. The protein is Shikimate kinase of Chloroherpeton thalassium (strain ATCC 35110 / GB-78).